The following is a 202-amino-acid chain: CASP-like protein 1E1 (202 aa).

Residues 1-33 (MESQCRPNVDGVHNGVESHVKVVEKPRSVGSSS) lie on the Cytoplasmic side of the membrane. Residues 34 to 54 (EFVLRILGLLLTLIAAVVAGV) traverse the membrane as a helical segment. Residues 55-85 (DKQTKIIPLTLIKTLPSLHVPVTAKWSDMSA) lie on the Extracellular side of the membrane. The helical transmembrane segment at 86–106 (FVYLVVSNAIACSYAAISLVL) threads the bilayer. Residues 107 to 118 (VTMLGRRGKGGR) lie on the Cytoplasmic side of the membrane. A helical membrane pass occupies residues 119–139 (VLAVIVLDLHMVGLLFSANGA). Residues 140–172 (ATAVGVLGQYGNSHVEWKKVCNVFDSFCHHLVA) are Extracellular-facing. The chain crosses the membrane as a helical span at residues 173–193 (SLALSFLGSLSFLGLVLLAIL). The Cytoplasmic portion of the chain corresponds to 194–202 (NLHKKSSTK).

Belongs to the Casparian strip membrane proteins (CASP) family. As to quaternary structure, homodimer and heterodimers.

It is found in the cell membrane. In Vitis vinifera (Grape), this protein is CASP-like protein 1E1.